We begin with the raw amino-acid sequence, 108 residues long: uncharacterized protein (108 aa).

This is an uncharacterized protein from Mycoplasma pneumoniae (strain ATCC 29342 / M129 / Subtype 1) (Mycoplasmoides pneumoniae).